A 439-amino-acid chain; its full sequence is CBL-interacting protein kinase 14 (439 aa).

The Protein kinase domain maps to Y12–F267. ATP is bound by residues L18–V26 and K41. The Proton acceptor role is filled by D135. The activation loop stretch occupies residues D153 to E182. In terms of domain architecture, NAF spans R298–I333. Residues R338 to V367 form a PPI region.

Belongs to the protein kinase superfamily. CAMK Ser/Thr protein kinase family. SNF1 subfamily. Requires Mn(2+) as cofactor.

It catalyses the reaction L-seryl-[protein] + ATP = O-phospho-L-seryl-[protein] + ADP + H(+). It carries out the reaction L-threonyl-[protein] + ATP = O-phospho-L-threonyl-[protein] + ADP + H(+). Functionally, CIPK serine-threonine protein kinases interact with CBL proteins. Binding of a CBL protein to the regulatory NAF domain of CIPK protein lead to the activation of the kinase in a calcium-dependent manner. The sequence is that of CBL-interacting protein kinase 14 (CIPK14) from Oryza sativa subsp. japonica (Rice).